Consider the following 2211-residue polypeptide: Orsellinic acid synthase (2211 aa).

Residues 44-246 form an N-terminal acylcarrier protein transacylase domain (SAT) region; it reads TFREQVSDAI…TVAVVHSLYH (203 aa). The Ketosynthase family 3 (KS3) domain maps to 380–805; the sequence is WDDIAIVGMA…GSNAAVIIGE (426 aa). Residues Cys549, His684, and His724 each act as for beta-ketoacyl synthase activity in the active site. The segment at 910 to 1228 is malonyl-CoA:ACP transacylase (MAT) domain; that stretch reads VFIFSGQGSQ…QLTTLKKNVP (319 aa). Ser1006 (for acyl/malonyl transferase activity) is an active-site residue. The N-terminal hotdog fold stretch occupies residues 1309–1440; the sequence is HAIQKLSHGA…GVVKQSNMAS (132 aa). The 321-residue stretch at 1309–1629 folds into the PKS/mFAS DH domain; it reads HAIQKLSHGA…FQHVKIPLIE (321 aa). The tract at residues 1334–1573 is product template (PT) domain; sequence EFIEGHLVCG…GATTLRAPVV (240 aa). His1339 serves as the catalytic Proton acceptor; for dehydratase activity. Positions 1473 to 1629 are C-terminal hotdog fold; the sequence is VQVFSKRAMY…FQHVKIPLIE (157 aa). Asp1537 serves as the catalytic Proton donor; for dehydratase activity. 2 consecutive Carrier domains span residues 1681-1755 and 1787-1865; these read AAPE…EALS and STVD…VKRP. Ser1715 carries the O-(pantetheine 4'-phosphoryl)serine modification. A disordered region spans residues 1755–1786; sequence SPTPVGNDVDNDSPTPGSERGSDSAISTPASV. Ser1824 is modified (O-(pantetheine 4'-phosphoryl)serine). The thioesterase (TE) domain stretch occupies residues 1937–2204; sequence SGKSPLFLIH…AAVSAALVDA (268 aa).

The enzyme catalyses 3 malonyl-CoA + acetyl-CoA + 2 H(+) = orsellinate + 3 CO2 + 4 CoA. It functions in the pathway secondary metabolite biosynthesis. Non-reducing polyketide synthase; part of the gene cluster that mediates the biosynthesis of the bibenzoquinone oosporein, a metabolite required for fungal virulence that acts by evading host immunity to facilitate fungal multiplication in insects. The non-reducing polyketide synthase OpS1 produces orsellinic acid by condensing acetyl-CoA with 3 malonyl-CoA units. Orsellinic acid is then hydroxylated to benzenetriol by the hydroxylase OpS4. The intermediate is oxidized either nonenzymatically to 5,5'-dideoxy-oosporein or enzymatically to benzenetetrol by the oxidoreductase OpS7. The latter is further dimerized to oosporein by the catalase OpS5. OpS6 probably functions en route for protecting cells against oxidative stress by scavenging any leaked free radical form of benzenetetrol by activating the thiol group of glutathione. This is Orsellinic acid synthase from Beauveria bassiana (strain ARSEF 2860) (White muscardine disease fungus).